The sequence spans 127 residues: Small ribosomal subunit protein eS8 (127 aa).

Belongs to the eukaryotic ribosomal protein eS8 family. In terms of assembly, part of the 30S ribosomal subunit.

The sequence is that of Small ribosomal subunit protein eS8 (rps8e) from Pyrococcus abyssi (strain GE5 / Orsay).